The following is a 250-amino-acid chain: MEKLEKLYEGKAKQLYATDDPEVLWVEYKNTATAGDGEKKEDFTGKGRLNNLITTIIFDLLKKRGIDSHLIKRVNDTGQLVRKVNMFPLEIVLRNVAAGHFCSRLGVEEGLPLKEPVLEYFLKNDDLHDPFVNDDDLVALDVCTREDLAEIAPLARKINEALIEIFAKIDVKLVDFKIEMGRATDGTLLLADEITPDSCRLWDQKDHSGKVEHLDKDLFRRGLGSIIPAYEEIEERLAELAKSEGIEVAE.

The protein belongs to the SAICAR synthetase family.

The enzyme catalyses 5-amino-1-(5-phospho-D-ribosyl)imidazole-4-carboxylate + L-aspartate + ATP = (2S)-2-[5-amino-1-(5-phospho-beta-D-ribosyl)imidazole-4-carboxamido]succinate + ADP + phosphate + 2 H(+). Its pathway is purine metabolism; IMP biosynthesis via de novo pathway; 5-amino-1-(5-phospho-D-ribosyl)imidazole-4-carboxamide from 5-amino-1-(5-phospho-D-ribosyl)imidazole-4-carboxylate: step 1/2. This Bifidobacterium longum subsp. infantis (strain ATCC 15697 / DSM 20088 / JCM 1222 / NCTC 11817 / S12) protein is Phosphoribosylaminoimidazole-succinocarboxamide synthase.